The chain runs to 45 residues: uncharacterized protein (45 aa).

A disordered region spans residues 18–45 (RRGRIGVQPSPERRSEVVGPFPLARSLS).

This is an uncharacterized protein from Homo sapiens (Human).